The chain runs to 158 residues: FUN14 domain-containing protein 1 (158 aa).

Positions 21–24 (YEVV) match the YXXL motif. 2 helical membrane-spanning segments follow: residues 51 to 70 (YSVTTQLVMGGLTGWCAGYL) and 77 to 98 (IAATAVGGGFLLLQIANHSGYV).

Belongs to the FUN14 family.

The protein resides in the mitochondrion outer membrane. In terms of biological role, acts as an activator of hypoxia-induced mitophagy, an important mechanism for mitochondrial quality control. The chain is FUN14 domain-containing protein 1 (fundc1) from Tetraodon nigroviridis (Spotted green pufferfish).